We begin with the raw amino-acid sequence, 214 residues long: Phosphatidylserine decarboxylase proenzyme (214 aa).

S182 serves as the catalytic Schiff-base intermediate with substrate; via pyruvic acid. S182 is modified (pyruvic acid (Ser); by autocatalysis).

The protein belongs to the phosphatidylserine decarboxylase family. PSD-A subfamily. Heterodimer of a large membrane-associated beta subunit and a small pyruvoyl-containing alpha subunit. It depends on pyruvate as a cofactor. Post-translationally, is synthesized initially as an inactive proenzyme. Formation of the active enzyme involves a self-maturation process in which the active site pyruvoyl group is generated from an internal serine residue via an autocatalytic post-translational modification. Two non-identical subunits are generated from the proenzyme in this reaction, and the pyruvate is formed at the N-terminus of the alpha chain, which is derived from the carboxyl end of the proenzyme. The post-translation cleavage follows an unusual pathway, termed non-hydrolytic serinolysis, in which the side chain hydroxyl group of the serine supplies its oxygen atom to form the C-terminus of the beta chain, while the remainder of the serine residue undergoes an oxidative deamination to produce ammonia and the pyruvoyl prosthetic group on the alpha chain.

Its subcellular location is the cell membrane. The enzyme catalyses a 1,2-diacyl-sn-glycero-3-phospho-L-serine + H(+) = a 1,2-diacyl-sn-glycero-3-phosphoethanolamine + CO2. It functions in the pathway phospholipid metabolism; phosphatidylethanolamine biosynthesis; phosphatidylethanolamine from CDP-diacylglycerol: step 2/2. Functionally, catalyzes the formation of phosphatidylethanolamine (PtdEtn) from phosphatidylserine (PtdSer). This Burkholderia cenocepacia (strain ATCC BAA-245 / DSM 16553 / LMG 16656 / NCTC 13227 / J2315 / CF5610) (Burkholderia cepacia (strain J2315)) protein is Phosphatidylserine decarboxylase proenzyme.